The following is a 639-amino-acid chain: Polyphenol oxidase, chloroplastic (639 aa).

Residues 1-101 constitute a chloroplast transit peptide; sequence MATLSSPTII…EGANYYNTLA (101 aa). The segment at 35–58 is disordered; the sequence is GVRSVNGKVSCQTKNNNGNDENNQ. Intrachain disulfides connect cysteine 111-cysteine 127 and cysteine 126-cysteine 194. Positions 193, 214, 223, 354, 358, and 388 each coordinate Cu cation. The 2'-(S-cysteinyl)-histidine (Cys-His) cross-link spans 197-214; the sequence is CDGSYPVLGHNDTRLEVH.

It belongs to the tyrosinase family. Requires Cu(2+) as cofactor.

It localises to the plastid. Its subcellular location is the chloroplast thylakoid lumen. The catalysed reaction is 2 catechol + O2 = 2 1,2-benzoquinone + 2 H2O. In terms of biological role, catalyzes the oxidation of mono- and o-diphenols to o-diquinones. The protein is Polyphenol oxidase, chloroplastic of Spinacia oleracea (Spinach).